Consider the following 472-residue polypeptide: UDP-glycosyltransferase 2 (472 aa).

UDP-alpha-D-glucose-binding positions include Ser283, 348 to 349 (WA), 366 to 374 (HCGWNSVLE), and 388 to 391 (YAEQ).

The protein belongs to the UDP-glycosyltransferase family. Highly expressed in roots. Expressed in leaves and stems.

Its function is as follows. Glycosyltransferase that possesses isoflavonoids 4'-O- and 7-O-glucosyltransferase activities. Shows a successive glucosylation toward the acceptors producing their corresponding 4',7-O-diglucosides. Can use genistein, formononetin, daidzein, liquiritigenin and naringenin as substrates. Also shows a 3'-O-glucosylation activity in vitro. The chain is UDP-glycosyltransferase 2 from Pueraria montana var. lobata (Kudzu vine).